The primary structure comprises 185 residues: MLKAKILFVGPCESGKTVLANFLTESSDITEYNPTQGVRILEFENPHVTSNNKGTGCEFELWDCGGDSKFESCWPALMKDAHGVVIVFNADIPSHLKEIEMWYSCFVQQQFLQDSHCMLVAHHKPGSGGDKSNLALSPPLNKLKLVHSNLEEDPEEVRVEFIKYLKSIINSMSESRDREEMLIIT.

Residues 10-17 (GPCESGKT), 63-67 (DCGGD), and 123-126 (HKPG) each bind GTP. A Phosphoserine modification is found at serine 137.

Belongs to the small GTPase superfamily. Rab family. In terms of assembly, component of the IFT complex B, at least composed of IFT20, IFT22, IFT25, IFT27, IFT46, IFT52, TRAF3IP1/IFT54, IFT57, IFT74, IFT80, IFT81, and IFT88. Interacts with IFT88. Interacts with CFAP61.

It localises to the cell projection. It is found in the cilium. Its function is as follows. Small GTPase-like component of the intraflagellar transport (IFT) complex B. This chain is Intraflagellar transport protein 22 homolog (Ift22), found in Rattus norvegicus (Rat).